The following is a 179-amino-acid chain: ATP synthase subunit delta (179 aa).

This sequence belongs to the ATPase delta chain family. F-type ATPases have 2 components, F(1) - the catalytic core - and F(0) - the membrane proton channel. F(1) has five subunits: alpha(3), beta(3), gamma(1), delta(1), epsilon(1). F(0) has three main subunits: a(1), b(2) and c(10-14). The alpha and beta chains form an alternating ring which encloses part of the gamma chain. F(1) is attached to F(0) by a central stalk formed by the gamma and epsilon chains, while a peripheral stalk is formed by the delta and b chains.

The protein resides in the cell membrane. F(1)F(0) ATP synthase produces ATP from ADP in the presence of a proton or sodium gradient. F-type ATPases consist of two structural domains, F(1) containing the extramembraneous catalytic core and F(0) containing the membrane proton channel, linked together by a central stalk and a peripheral stalk. During catalysis, ATP synthesis in the catalytic domain of F(1) is coupled via a rotary mechanism of the central stalk subunits to proton translocation. Functionally, this protein is part of the stalk that links CF(0) to CF(1). It either transmits conformational changes from CF(0) to CF(1) or is implicated in proton conduction. The protein is ATP synthase subunit delta of Staphylococcus carnosus (strain TM300).